Consider the following 150-residue polypeptide: MAALDPTLLILLVLAGLGIISHNMTVTLAILTLIAVRITPLNQFFPWIEKYGLTIGILILTIGVMTPIASGKISASEVLHSFVQWKSILAIVVGVAVSWLGGRGVSLMTHQPSVVAGLLVGTVLGVALFRGVPVGPLIAAGLLSLVIGKS.

The next 4 helical transmembrane spans lie at 1-21 (MAALDPTLLILLVLAGLGIIS), 51-71 (YGLTIGILILTIGVMTPIASG), 88-108 (ILAIVVGVAVSWLGGRGVSLM), and 114-134 (VVAGLLVGTVLGVALFRGVPV).

This sequence belongs to the UPF0756 family.

Its subcellular location is the cell membrane. This Yersinia enterocolitica serotype O:8 / biotype 1B (strain NCTC 13174 / 8081) protein is UPF0756 membrane protein YE1142.